A 201-amino-acid chain; its full sequence is Holliday junction branch migration complex subunit RuvA (201 aa).

The interval 1 to 64 (MIGRLYGKII…EDAHLLFGFA (64 aa)) is domain I. Residues 65-143 (QKQDRTLFRE…GIAQTDFFVE (79 aa)) form a domain II region. The interval 144–154 (HSHETMVATYE) is flexible linker. The interval 154–201 (EIDASEEARDALLALGYKLTDAEKMIKKVHKSGATSEQLIRDALKASL) is domain III.

Belongs to the RuvA family. As to quaternary structure, homotetramer. Forms an RuvA(8)-RuvB(12)-Holliday junction (HJ) complex. HJ DNA is sandwiched between 2 RuvA tetramers; dsDNA enters through RuvA and exits via RuvB. An RuvB hexamer assembles on each DNA strand where it exits the tetramer. Each RuvB hexamer is contacted by two RuvA subunits (via domain III) on 2 adjacent RuvB subunits; this complex drives branch migration. In the full resolvosome a probable DNA-RuvA(4)-RuvB(12)-RuvC(2) complex forms which resolves the HJ.

The protein resides in the cytoplasm. Functionally, the RuvA-RuvB-RuvC complex processes Holliday junction (HJ) DNA during genetic recombination and DNA repair, while the RuvA-RuvB complex plays an important role in the rescue of blocked DNA replication forks via replication fork reversal (RFR). RuvA specifically binds to HJ cruciform DNA, conferring on it an open structure. The RuvB hexamer acts as an ATP-dependent pump, pulling dsDNA into and through the RuvAB complex. HJ branch migration allows RuvC to scan DNA until it finds its consensus sequence, where it cleaves and resolves the cruciform DNA. The polypeptide is Holliday junction branch migration complex subunit RuvA (Haemophilus ducreyi (strain 35000HP / ATCC 700724)).